Consider the following 130-residue polypeptide: Small ribosomal subunit protein uS9 (130 aa).

The protein belongs to the universal ribosomal protein uS9 family.

This chain is Small ribosomal subunit protein uS9, found in Geobacillus sp. (strain WCH70).